Here is a 290-residue protein sequence, read N- to C-terminus: 4-diphosphocytidyl-2-C-methyl-D-erythritol kinase (290 aa).

Residue lysine 11 is part of the active site. 97 to 107 serves as a coordination point for ATP; sequence PVAAGIGGGSS. Aspartate 139 is an active-site residue.

This sequence belongs to the GHMP kinase family. IspE subfamily.

The enzyme catalyses 4-CDP-2-C-methyl-D-erythritol + ATP = 4-CDP-2-C-methyl-D-erythritol 2-phosphate + ADP + H(+). The protein operates within isoprenoid biosynthesis; isopentenyl diphosphate biosynthesis via DXP pathway; isopentenyl diphosphate from 1-deoxy-D-xylulose 5-phosphate: step 3/6. Catalyzes the phosphorylation of the position 2 hydroxy group of 4-diphosphocytidyl-2C-methyl-D-erythritol. This chain is 4-diphosphocytidyl-2-C-methyl-D-erythritol kinase, found in Methylobacterium radiotolerans (strain ATCC 27329 / DSM 1819 / JCM 2831 / NBRC 15690 / NCIMB 10815 / 0-1).